The primary structure comprises 243 residues: DNA repair protein RecO (243 aa).

The protein belongs to the RecO family.

Involved in DNA repair and RecF pathway recombination. The chain is DNA repair protein RecO from Frankia casuarinae (strain DSM 45818 / CECT 9043 / HFP020203 / CcI3).